The following is a 153-amino-acid chain: Prophage Rz endopeptidase RzpD (153 aa).

Functionally, necessary for host cell lysis. It is believed to code for an endopeptidase that cleaves the amino-carboxyl cross-link between the diaminopimelic acid and D-alanine residues in the murein component of the bacterial cell wall. This chain is Prophage Rz endopeptidase RzpD (rzpD), found in Escherichia coli (strain K12).